A 434-amino-acid polypeptide reads, in one-letter code: Protein ENHANCED PSEUDOMONAS SUSCEPTIBILITY 1 (434 aa).

Residue aspartate 376 is the Proton acceptor of the active site.

Belongs to the plant acyltransferase family.

Required for pathogen-induced salicylic acid (SA) accumulation and SA-mediated resistance to virulent and avirulent pathogens (e.g. P.syringae). The chain is Protein ENHANCED PSEUDOMONAS SUSCEPTIBILITY 1 from Arabidopsis thaliana (Mouse-ear cress).